Reading from the N-terminus, the 542-residue chain is MAAKEIKFSTEAREKMLRGVDILANAVKATLGPKGRNVVIERSFGAPRITKDGVSVAKEIELEDKFENMGAQMVREVASKTSDVAGDGTTTATVLAQAIVKEGAKAVTSGMNPMDLKRGIDLAVGAIVAELKANARKISNNSEIAQVGTISANGDAEIGRFLAEAMERVGNDGVITVEEAKTAETELEVVEGMQFDRGYLSPYFVTNADKMRVEFEDPYILIHEKKLSNLQSMLPVLEAVVQSSKPLLIIAEDVEGEALATLVVNKLRGGLKIAAVKAPGFGDRRKAMLEDIAILTAGTVISEDLGIKLESVTLDMLGRAKKVSIEKENTTIVDGSGAKSDIEGRVAQIRAQIEETTSDYDREKLQERLAKLAGGVAVIRVGGSTEVEVKEKKDRVDDALHATRAAVEEGILPGGGVALLRAVKALDNVETANGDQRVGVDIVRRAVEAPARQIAENAGAEGSVIVGKLREKSEFSYGWNAQTGEYGDLYAQGVIDPAKVVRTALQDAASIAGLLVTTEAMIAEKPRKDAPPPMPAGHGMDF.

Residues 30–33, lysine 51, 87–91, glycine 415, and aspartate 496 each bind ATP; these read TLGP and DGTTT.

The protein belongs to the chaperonin (HSP60) family. As to quaternary structure, forms a cylinder of 14 subunits composed of two heptameric rings stacked back-to-back. Interacts with the co-chaperonin GroES.

The protein localises to the cytoplasm. The enzyme catalyses ATP + H2O + a folded polypeptide = ADP + phosphate + an unfolded polypeptide.. Its function is as follows. Together with its co-chaperonin GroES, plays an essential role in assisting protein folding. The GroEL-GroES system forms a nano-cage that allows encapsulation of the non-native substrate proteins and provides a physical environment optimized to promote and accelerate protein folding. This is Chaperonin GroEL 3 from Rhizobium johnstonii (strain DSM 114642 / LMG 32736 / 3841) (Rhizobium leguminosarum bv. viciae).